The following is a 490-amino-acid chain: MVSAAAGWAAPAFAVAAVVIWVVLCGELLRRRRRGAGSGKGDAAAAARLPPGSFGWPVVGETLEFVSCAYSPRPEAFVDKRRKLHGSAVFRSHLFGSATVVTADAEVSRFVLQSDARAFVPWYPRSLTELMGKSSILLINGALQRRVHGLVGAFFKSSHLKSQLTADMRRRLSPALSSFPDSSLLHVQHLAKSVVFEILVRGLIGLEAGEEMQQLKQQFQEFIVGLMSLPIKLPGTRLYRSLQAKKKMARLIQRIIREKRARRAAASLPRDAIDMLIGDGSDELTDELISDNMIDLMIPAEDSVPVLITLAVKFLSECPLALHQLEEENIQLKRRKTDMGETLQWTDYMSLSFTQHVITETLRLGNIIGGIMRKAVRDVEVKGHLIPKGWCVFVYFRSVHLDDTLYDEPYKFNPWRWKEKDMSNGSFTPFGGGQRLCPGLDLARLEASIFLHHLVTSFRWVAEEDHIVNFPTVRLKRGMPIRVTAKEDDD.

Residues 4–24 (AAAGWAAPAFAVAAVVIWVVL) form a helical membrane-spanning segment. Cys437 contributes to the heme binding site.

The protein belongs to the cytochrome P450 family. It depends on heme as a cofactor.

The protein resides in the membrane. It catalyses the reaction 6-deoxoteasterone + reduced [NADPH--hemoprotein reductase] + O2 = 3-dehydro-6-deoxoteasterone + oxidized [NADPH--hemoprotein reductase] + 2 H2O + H(+). It functions in the pathway plant hormone biosynthesis; brassinosteroid biosynthesis. Functionally, catalyzes the C6-oxidation step in brassinosteroids biosynthesis. May convert 6-deoxoteasterone (6-deoxoTE) to 3-dehydro-6-deoxoteasterone (6-deoxo3DT, 6-deoxo3DHT), and teasterone (TE) to 3-dehydroteasterone (3DT, 3-DHT). Involved in the elongation of leaf sheaths and stems. The sequence is that of Cytochrome P450 90D2 from Oryza sativa subsp. indica (Rice).